The primary structure comprises 427 residues: Adenylosuccinate synthetase (427 aa).

Residues 12–18 and 40–42 contribute to the GTP site; these read GDEGKGK and GHT. Aspartate 13 (proton acceptor) is an active-site residue. Aspartate 13 and glycine 40 together coordinate Mg(2+). Residues 13-16, 38-41, threonine 127, arginine 141, glutamine 222, threonine 237, and arginine 301 contribute to the IMP site; these read DEGK and NAGH. Histidine 41 serves as the catalytic Proton donor. 297–303 contributes to the substrate binding site; sequence VVTKRPR. GTP-binding positions include arginine 303, 329-331, and 411-413; these read SLD and AVG.

The protein belongs to the adenylosuccinate synthetase family. In terms of assembly, homodimer. Mg(2+) is required as a cofactor.

The protein localises to the cytoplasm. It catalyses the reaction IMP + L-aspartate + GTP = N(6)-(1,2-dicarboxyethyl)-AMP + GDP + phosphate + 2 H(+). It functions in the pathway purine metabolism; AMP biosynthesis via de novo pathway; AMP from IMP: step 1/2. In terms of biological role, plays an important role in the de novo pathway of purine nucleotide biosynthesis. Catalyzes the first committed step in the biosynthesis of AMP from IMP. The protein is Adenylosuccinate synthetase of Leuconostoc mesenteroides subsp. mesenteroides (strain ATCC 8293 / DSM 20343 / BCRC 11652 / CCM 1803 / JCM 6124 / NCDO 523 / NBRC 100496 / NCIMB 8023 / NCTC 12954 / NRRL B-1118 / 37Y).